The chain runs to 431 residues: 3'3'-cGAMP-specific phosphodiesterase 1 (431 aa).

Residues 39–155 (DINHGHRVGY…IFLADRVDYL (117 aa)) form the HD domain. An HD-GYP domain is found at 231-427 (GVEEIMSIAM…YYQLSIAESP (197 aa)). A divalent metal cation is bound by residues H288 and D289. The active-site Proton donor is the K292. The a divalent metal cation site is built by H317, H341, H342, and D370.

As to quaternary structure, monomer. Requires Ca(2+) as cofactor. The cofactor is Mg(2+).

It carries out the reaction 3',3'-cGAMP + H2O = 5'-pApG-3' + H(+). It catalyses the reaction 5'-pApG-3' + H2O = 5'-ApG-3' + phosphate. Phosphodiesterase (PDE) that catalyzes the hydrolysis of 3'3'-cyclic GMP-AMP (3'3'-cGAMP), leading to linear 5'-pApG. Also displays 5'-nucleotidase activity, further hydrolyzing 5'-pApG to 5'-ApG. Counteracts the function of the 3'3'-cGAMP synthase DncV, and is involved in the modulation of intracellular 3'3'-cGAMP levels. Enhances bacterial chemotaxis and inhibits intestinal colonization in vivo. Thus exerts a crucial role in regulating bacterial infectivity through catalyzing 3'3'-cGAMP degradation. Is specific for 3'3'-cGAMP since it cannot degrade other cGAMP linkage isomers (3'2'-, 2'3'-, and 2'2'-cGAMPs). Is also able to hydrolyze c-di-GMP but not c-di-AMP. The chain is 3'3'-cGAMP-specific phosphodiesterase 1 from Vibrio cholerae serotype O1 (strain ATCC 39315 / El Tor Inaba N16961).